Reading from the N-terminus, the 353-residue chain is MHLRHLFSLRLRGSLLLGSLLVASSFSTQAAEEMLRKAVGKGAYEMAYSQQENALWLATSQSRKLDKGGVVYRLDPVTLEVTQAIHNDLKPFGATINNTTQTLWFGNTVNSAVTAIDAKTGEVKGRLVLDDRKRTEEVRPLQPRELVADDATNTVYISGIGKDSVIWVVDGENIKLKTAIQNTGKMSTGLALDSKGKRLYTTNADGELITIDTADNKILSRKKLLDDGKEHFFINISLDTARQRAFITDSKAAEVLVVDTRNGNILAKVAAPESLAVLFNPARNEAYVTHRQAGKVSVIDAKSYKVVKTFDTPTHPNSLALSADGKTLYVSVKQKSTKQQEATQPDDVIRIAL.

The first 30 residues, 1–30 (MHLRHLFSLRLRGSLLLGSLLVASSFSTQA), serve as a signal peptide directing secretion.

This is an uncharacterized protein from Escherichia coli O157:H7.